The sequence spans 1076 residues: Carbamoyl phosphate synthase large chain (1076 aa).

Residues Met1–Glu402 form a carboxyphosphate synthetic domain region. ATP contacts are provided by Arg129, Arg169, Gly175, Gly176, Glu208, Val210, Glu215, Gly241, Val242, His243, Gln285, and Glu299. The 196-residue stretch at Lys133 to Val328 folds into the ATP-grasp 1 domain. Positions 285, 299, and 301 each coordinate Mg(2+). 3 residues coordinate Mn(2+): Gln285, Glu299, and Asn301. Positions Ile403 to Ala555 are oligomerization domain. Residues Leu556–Lys939 are carbamoyl phosphate synthetic domain. The ATP-grasp 2 domain maps to Ala680–Met871. The ATP site is built by Arg716, Lys755, Leu757, Glu762, Gly787, Val788, His789, Ser790, Gln830, and Glu842. Residues Gln830, Glu842, and Asn844 each coordinate Mg(2+). Residues Gln830, Glu842, and Asn844 each contribute to the Mn(2+) site. One can recognise an MGS-like domain in the interval Met938–Ser1076. Residues Leu940–Ser1076 are allosteric domain.

This sequence belongs to the CarB family. Composed of two chains; the small (or glutamine) chain promotes the hydrolysis of glutamine to ammonia, which is used by the large (or ammonia) chain to synthesize carbamoyl phosphate. Tetramer of heterodimers (alpha,beta)4. Mg(2+) serves as cofactor. It depends on Mn(2+) as a cofactor.

The catalysed reaction is hydrogencarbonate + L-glutamine + 2 ATP + H2O = carbamoyl phosphate + L-glutamate + 2 ADP + phosphate + 2 H(+). The enzyme catalyses hydrogencarbonate + NH4(+) + 2 ATP = carbamoyl phosphate + 2 ADP + phosphate + 2 H(+). It participates in amino-acid biosynthesis; L-arginine biosynthesis; carbamoyl phosphate from bicarbonate: step 1/1. It functions in the pathway pyrimidine metabolism; UMP biosynthesis via de novo pathway; (S)-dihydroorotate from bicarbonate: step 1/3. In terms of biological role, large subunit of the glutamine-dependent carbamoyl phosphate synthetase (CPSase). CPSase catalyzes the formation of carbamoyl phosphate from the ammonia moiety of glutamine, carbonate, and phosphate donated by ATP, constituting the first step of 2 biosynthetic pathways, one leading to arginine and/or urea and the other to pyrimidine nucleotides. The large subunit (synthetase) binds the substrates ammonia (free or transferred from glutamine from the small subunit), hydrogencarbonate and ATP and carries out an ATP-coupled ligase reaction, activating hydrogencarbonate by forming carboxy phosphate which reacts with ammonia to form carbamoyl phosphate. This chain is Carbamoyl phosphate synthase large chain, found in Archaeoglobus fulgidus (strain ATCC 49558 / DSM 4304 / JCM 9628 / NBRC 100126 / VC-16).